A 190-amino-acid chain; its full sequence is Large ribosomal subunit protein bL9 (190 aa).

This sequence belongs to the bacterial ribosomal protein bL9 family.

Binds to the 23S rRNA. This is Large ribosomal subunit protein bL9 from Methylorubrum extorquens (strain CM4 / NCIMB 13688) (Methylobacterium extorquens).